A 108-amino-acid chain; its full sequence is Nitrite reductase (NADH) small subunit (108 aa).

In terms of assembly, associates with NirB.

The protein resides in the cytoplasm. The catalysed reaction is NH4(+) + 3 NAD(+) + 2 H2O = nitrite + 3 NADH + 5 H(+). Required for activity of the reductase. The sequence is that of Nitrite reductase (NADH) small subunit (nirD) from Salmonella typhi.